The following is a 26-amino-acid chain: Acyl carrier protein (26 aa).

Residues 2–26 (SDIEQRIKQAVAEQLGMRAEEIKNE) enclose the Carrier domain.

The protein belongs to the acyl carrier protein (ACP) family. In terms of processing, 4'-phosphopantetheine is transferred from CoA to a specific serine of apo-ACP by AcpS. This modification is essential for activity because fatty acids are bound in thioester linkage to the sulfhydryl of the prosthetic group.

The protein localises to the cytoplasm. It participates in lipid metabolism; fatty acid biosynthesis. In terms of biological role, carrier of the growing fatty acid chain in fatty acid biosynthesis. This is Acyl carrier protein (acpP) from Acinetobacter calcoaceticus.